A 237-amino-acid polypeptide reads, in one-letter code: Ergosterol biosynthesis protein 29 (237 aa).

The chain crosses the membrane as a helical span at residues 36-56 (ITLFLIVVGTLAFFNELYITI).

The protein resides in the endoplasmic reticulum membrane. Its function is as follows. Part of the third module of ergosterol biosynthesis pathway that includes the late steps of the pathway. ERG29 regulates the activity of the iron-containing C4-methylsterol oxidase ERG25. The third module or late pathway involves the ergosterol synthesis itself through consecutive reactions that mainly occur in the endoplasmic reticulum (ER) membrane. Firstly, the squalene synthase ERG9 catalyzes the condensation of 2 farnesyl pyrophosphate moieties to form squalene, which is the precursor of all steroids. Squalene synthase is crucial for balancing the incorporation of farnesyl diphosphate (FPP) into sterol and nonsterol isoprene synthesis. Secondly, the squalene epoxidase ERG1 catalyzes the stereospecific oxidation of squalene to (S)-2,3-epoxysqualene, which is considered to be a rate-limiting enzyme in steroid biosynthesis. Then, the lanosterol synthase ERG7 catalyzes the cyclization of (S)-2,3 oxidosqualene to lanosterol, a reaction that forms the sterol core. In the next steps, lanosterol is transformed to zymosterol through a complex process involving various demethylation, reduction and desaturation reactions. The lanosterol 14-alpha-demethylase ERG11 (also known as CYP51) catalyzes C14-demethylation of lanosterol to produce 4,4'-dimethyl cholesta-8,14,24-triene-3-beta-ol, which is critical for ergosterol biosynthesis. The C-14 reductase ERG24 reduces the C14=C15 double bond of 4,4-dimethyl-cholesta-8,14,24-trienol to produce 4,4-dimethyl-cholesta-8,24-dienol. 4,4-dimethyl-cholesta-8,24-dienol is substrate of the C-4 demethylation complex ERG25-ERG26-ERG27 in which ERG25 catalyzes the three-step monooxygenation required for the demethylation of 4,4-dimethyl and 4alpha-methylsterols, ERG26 catalyzes the oxidative decarboxylation that results in a reduction of the 3-beta-hydroxy group at the C-3 carbon to an oxo group, and ERG27 is responsible for the reduction of the keto group on the C-3. ERG28 has a role as a scaffold to help anchor ERG25, ERG26 and ERG27 to the endoplasmic reticulum and ERG29 regulates the activity of the iron-containing C4-methylsterol oxidase ERG25. Then, the sterol 24-C-methyltransferase ERG6 catalyzes the methyl transfer from S-adenosyl-methionine to the C-24 of zymosterol to form fecosterol. The C-8 sterol isomerase ERG2 catalyzes the reaction which results in unsaturation at C-7 in the B ring of sterols and thus converts fecosterol to episterol. The sterol-C5-desaturase ERG3 then catalyzes the introduction of a C-5 double bond in the B ring to produce 5-dehydroepisterol. The C-22 sterol desaturase ERG5 further converts 5-dehydroepisterol into ergosta-5,7,22,24(28)-tetraen-3beta-ol by forming the C-22(23) double bond in the sterol side chain. Finally, ergosta-5,7,22,24(28)-tetraen-3beta-ol is substrate of the C-24(28) sterol reductase ERG4 to produce ergosterol. Functionally, plays a role in maintaining mitochondrial and plasma membrane integrity and consequently impacting the iron homeostasis, respiratory metabolism and antioxidant response. The chain is Ergosterol biosynthesis protein 29 from Saccharomyces cerevisiae (strain ATCC 204508 / S288c) (Baker's yeast).